A 106-amino-acid polypeptide reads, in one-letter code: Large ribosomal subunit protein bL21 (106 aa).

The protein belongs to the bacterial ribosomal protein bL21 family. As to quaternary structure, part of the 50S ribosomal subunit. Contacts protein L20.

This protein binds to 23S rRNA in the presence of protein L20. This is Large ribosomal subunit protein bL21 from Xanthomonas euvesicatoria pv. vesicatoria (strain 85-10) (Xanthomonas campestris pv. vesicatoria).